A 321-amino-acid polypeptide reads, in one-letter code: Glucokinase (321 aa).

8-13 is a binding site for ATP; sequence GDVGGT.

The protein belongs to the bacterial glucokinase family.

The protein resides in the cytoplasm. It carries out the reaction D-glucose + ATP = D-glucose 6-phosphate + ADP + H(+). The chain is Glucokinase from Klebsiella pneumoniae (strain 342).